Reading from the N-terminus, the 700-residue chain is Elongation factor G (700 aa).

In terms of domain architecture, tr-type G spans 8–290 (ERYRNIGISA…AVVEFMPSPV (283 aa)). Residues 17-24 (AHIDAGKT), 88-92 (DTPGH), and 142-145 (NKMD) contribute to the GTP site.

It belongs to the TRAFAC class translation factor GTPase superfamily. Classic translation factor GTPase family. EF-G/EF-2 subfamily.

The protein localises to the cytoplasm. Its function is as follows. Catalyzes the GTP-dependent ribosomal translocation step during translation elongation. During this step, the ribosome changes from the pre-translocational (PRE) to the post-translocational (POST) state as the newly formed A-site-bound peptidyl-tRNA and P-site-bound deacylated tRNA move to the P and E sites, respectively. Catalyzes the coordinated movement of the two tRNA molecules, the mRNA and conformational changes in the ribosome. The chain is Elongation factor G from Albidiferax ferrireducens (strain ATCC BAA-621 / DSM 15236 / T118) (Rhodoferax ferrireducens).